Consider the following 355-residue polypeptide: Peptide chain release factor 1 (355 aa).

Glutamine 231 is modified (N5-methylglutamine). The interval leucine 283–isoleucine 303 is disordered.

Belongs to the prokaryotic/mitochondrial release factor family. Methylated by PrmC. Methylation increases the termination efficiency of RF1.

Its subcellular location is the cytoplasm. Peptide chain release factor 1 directs the termination of translation in response to the peptide chain termination codons UAG and UAA. The chain is Peptide chain release factor 1 from Campylobacter lari (strain RM2100 / D67 / ATCC BAA-1060).